The primary structure comprises 753 residues: Nuclear hormone receptor family member daf-12 (753 aa).

Residues 1–109 (MGTNGGVIAE…PDDGLLDSSE (109 aa)) are disordered. Positions 20–29 (NPDKVEEPVV) are enriched in basic and acidic residues. A compositionally biased stretch (basic residues) spans 30–44 (RRKRVTRRRHRRIHS). A DNA-binding region (nuclear receptor) is located at residues 115–190 (QKTCRVCGDH…VGMKKEWILN (76 aa)). NR C4-type zinc fingers lie at residues 118-138 (CRVC…CESC) and 154-173 (CPYS…CQKC). The Nuclear localization signal motif lies at 191-206 (EEQLRRRKNSRLNNTG). Disordered stretches follow at residues 198 to 251 (KNSR…TINP), 266 to 314 (NAMP…GYDP), and 376 to 410 (GHPM…EKNH). The span at 201-211 (RLNNTGTCNKR) shows a compositional bias: polar residues. Over residues 212–227 (SQPGNQQSPQGPNQQP) the composition is skewed to low complexity. 2 stretches are compositionally biased toward polar residues: residues 285 to 301 (PVGS…SLTM) and 394 to 410 (MSLS…EKNH). The NR LBD domain occupies 516 to 753 (AELKALDAVR…ELPGEFFKIK (238 aa)).

It belongs to the nuclear hormone receptor family. In terms of assembly, interacts with din-1 isoform d. In terms of tissue distribution, expressed throughout muscles of the pharynx. Expressed in epidermal seam cells, the vulva, head neurons, mature spermatheca, uterus and intestine.

The protein localises to the nucleus. In terms of biological role, nuclear receptor which binds directly to response elements in target gene promoters. Activity is modulated by binding of steroid hormone ligands that include dafachronic acids. Regulates expression of genes involved in postembryonic development and the dauer diapause, in response to environmental cues. Inhibits the expression of let-7 family members when bound to corepressor din-1s which is an isoform of din-1. Plays a role in controlling the timing of seam cell development during the larval stages. Has a role in the immune response to bacterial infection, via regulation of let-7 miRNAs. Controls expression of genes that promote the aerobic catabolism of fatty acids for reproductive growth. May be involved in thermotolerance. This chain is Nuclear hormone receptor family member daf-12, found in Caenorhabditis elegans.